The following is a 444-amino-acid chain: Putative methylesterase 13, chloroplastic (444 aa).

Disordered stretches follow at residues 1–32 (MGNSFTCISHEQEQRPKKSSGGGGNNSGKYKY), 49–90 (PSLS…KDSH), and 124–176 (SVVY…QLVD). A chloroplast-targeting transit peptide spans 1–60 (MGNSFTCISHEQEQRPKKSSGGGGNNSGKYKYVRRLSLMPSFRRRTLLPSLSCSGSSSTS). Positions 49–64 (PSLSCSGSSSTSSSKK) are enriched in low complexity. Over residues 65–82 (GGIKAKTKKIRERHHHHH) the composition is skewed to basic residues. The span at 124-148 (SVVYPSAQPSGTSSGPVSAVQTPKK) shows a compositional bias: polar residues. Residues 149–164 (SSAGFVRSSSSRQRSS) show a composition bias toward low complexity. The region spanning 190–310 (FVLVHGGGFG…LFNQQLGSND (121 aa)) is the AB hydrolase-1 domain. Aspartate 264 functions as the Acyl-ester intermediate in the catalytic mechanism. Catalysis depends on charge relay system residues aspartate 390 and histidine 418.

It belongs to the AB hydrolase superfamily. Methylesterase family.

The protein localises to the plastid. The protein resides in the chloroplast. Its function is as follows. Putative methylesterase. The chain is Putative methylesterase 13, chloroplastic from Arabidopsis thaliana (Mouse-ear cress).